The chain runs to 404 residues: CD2 homolog (404 aa).

Positions 1-16 are cleaved as a signal peptide; sequence MFITLIFLSYINIVLS. Residues 17–225 are Extracellular-facing; the sequence is NNYWARLNET…QNYFLENIHT (209 aa). 10 N-linked (GlcNAc...) asparagine; by host glycosylation sites follow: N24, N87, N92, N96, N122, N139, N167, N193, N200, and N206. 2 disulfide bridges follow: C140/C207 and C147/C190. Residues 226–246 traverse the membrane as a helical segment; the sequence is LFYIIIFIVSGLIASIFISII. Over 247-404 the chain is Cytoplasmic; sequence TFLSLRKRKK…ISLIHVDRII (158 aa). Positions 260–295 are disordered; sequence EIESPPPESNEEEQCQHDDTTSIHEPSPREPLLPKP. The span at 273–287 shows a compositional bias: basic and acidic residues; the sequence is QCQHDDTTSIHEPSP. Tandem repeats lie at residues 322 to 327, 328 to 333, 334 to 339, 340 to 345, 346 to 351, 352 to 357, and 358 to 363. A 7 X 6 AA tandem repeats of [KN]-P-C-P-P-P region spans residues 322–363; sequence NPCPPPKPCPPPKPCPPPKPCPPPKPCPPPKPCPPPKPCPPP. The segment covering 357–388 has biased composition (pro residues); it reads PKPCPPPKPCSSPESYSPPKPLPSIPLLPNIP. Residues 357-390 form a disordered region; sequence PKPCPPPKPCSSPESYSPPKPLPSIPLLPNIPPL.

It belongs to the asfivirus CD2 homolog protein family. In terms of assembly, both glycosylated and nonglycosylated forms interact (via C-terminus) with the host AP-1 complex. In terms of processing, cleaved into two fragments of 63 kDa and 26 kDa containing respectively the glycosylated N-terminus and the nonglycosylated C-terminus. A full-length 89-kDa glycosylated form also exists.

The protein localises to the host membrane. It localises to the virion membrane. Its subcellular location is the host Golgi apparatus. Its function is as follows. May play an immunosuppressive role by inhibiting lymphocyte proliferation and subsequently facilitating viral replication and generalization of infection. Responsible for viral hemadsorption, which may help viral spread. Increases virus replication in the tick vector at the step of virus uptake or replication in the tick gut. May play a role in the host Golgi reorganization to yield viral factories. May play a role in host cell penetration. In African swine fever virus (isolate Tick/South Africa/Pretoriuskop Pr4/1996) (ASFV), this protein is CD2 homolog.